A 543-amino-acid polypeptide reads, in one-letter code: Transmembrane protease serine 13 (543 aa).

2 disordered regions span residues 1-96 (MDRG…TRVY) and 109-129 (RASPARSAPATRATRESPGLS). The Cytoplasmic segment spans residues 1–143 (MDRGSHRNSS…SWQETQRQLP (143 aa)). 2 tandem repeats follow at residues 14–17 (TPPQ) and 18–22 (ASPAR). Positions 14 to 49 (TPPQASPARTSPARAPPQASPARTPPQASPARTPPQ) are 4 X 4 AA repeats of T-P-P-Q. The interval 18–69 (ASPARTSPARAPPQASPARTPPQASPARTPPQASPARAPPPQASPARASPAR) is 8 X 5 AA repeats of A-S-P-A-R. The 2-2; approximate repeat unit spans residues 23 to 27 (TSPAR). A compositionally biased stretch (pro residues) spans 27–60 (RAPPQASPARTPPQASPARTPPQASPARAPPPQA). The stretch at 28 to 31 (APPQ) is one 1-2; approximate repeat. A run of 5 repeats spans residues 32 to 36 (ASPAR), 37 to 40 (TPPQ), 41 to 45 (ASPAR), 46 to 49 (TPPQ), and 50 to 54 (ASPAR). One copy of the 2-6; approximate repeat lies at 55–59 (APPPQ). 2 tandem repeats follow at residues 60–64 (ASPAR) and 65–69 (ASPAR). Low complexity-rich tracts occupy residues 61-94 (SPARASPARAPPSRSSSGRSSSARSASTTSSPTR) and 109-120 (RASPARSAPATR). A helical; Signal-anchor for type II membrane protein membrane pass occupies residues 144 to 164 (LIGCVILLISLVISLILLFYF). Over 165 to 543 (WRGHTGIKYK…MESEVRFRKS (379 aa)) the chain is Extracellular. An LDL-receptor class A domain is found at 180-202 (CPIHAVRCDGVVDCKMKSDELGC). In terms of domain architecture, SRCR spans 199-301 (ELGCVRFDWD…HCGLRAMTGR (103 aa)). Cystine bridges form between Cys226–Cys290, Cys239–Cys293, and Cys327–Cys343. 2 N-linked (GlcNAc...) asparagine glycosylation sites follow: Asn231 and Asn268. The Peptidase S1 domain maps to 302 to 535 (IVGGALTSES…VLPWIYRKME (234 aa)). The Charge relay system role is filled by His342. Asn381 carries N-linked (GlcNAc...) asparagine glycosylation. Asp390 acts as the Charge relay system in catalysis. Residue Asn421 is glycosylated (N-linked (GlcNAc...) asparagine). Disulfide bonds link Cys424–Cys493, Cys456–Cys472, and Cys483–Cys511. Ser487 (charge relay system) is an active-site residue.

The protein belongs to the peptidase S1 family. As to quaternary structure, interacts with SPINT1/HAI-1; the interaction promotes the phosphorylation and cell membrane localization of TMPRSS13. Interacts with SPINT2/HAI-2; the interaction promotes the phosphorylation and cell membrane localization of TMPRSS13. Post-translationally, the inactive zymogen is post-translationally modified and then trafficked to the cell surface, whereby it undergoes autocatalytic cleavage resulting in an activated form that is released extracellularly. Phosphorylation is required for localization at the cell surface. Phosphorylation increases following inhibition of protease activity by SPINT2/HAI-2. In terms of tissue distribution, expressed in the suprabasal squamous epithelium of the epidermis, hair follicles, oral epithelium, cornea, upper digestive tract, transitional epithelium of the bladder, prostate, heart, intestine, kidney and thymus.

It localises to the cell membrane. The protein resides in the secreted. Its subcellular location is the cytoplasm. With respect to regulation, cleavage of HGF is inhibited by SPINT1/HAI-1 via the BPTI/Kunitz inhibitor 1 domain. Its function is as follows. Serine protease. Cleaves the proform of PRSS8/prostasin to form the active protein. Cleaves the proform of HGF to form the active protein which promotes MAPK signaling. Promotes the formation of the stratum corneum and subsequently the epidermal barrier in embryos. The sequence is that of Transmembrane protease serine 13 (Tmprss13) from Mus musculus (Mouse).